We begin with the raw amino-acid sequence, 594 residues long: ATP-dependent zinc metalloprotease FtsH 1 (594 aa).

Residues 1-2 (MR) are Cytoplasmic-facing. The chain crosses the membrane as a helical span at residues 3–23 (WWAGAALLLAALLFGRPAAAM). The Extracellular segment spans residues 24 to 92 (EAQPVAYSEF…RVEFVRPADP (69 aa)). The chain crosses the membrane as a helical span at residues 93–113 (IAFRTLLRFIPPLLILGAILW). Residues 114 to 594 (FTRRTAGGSG…ANSRGDEGNQ (481 aa)) are Cytoplasmic-facing. 186 to 193 (GPPGTGKT) lines the ATP pocket. His-408 lines the Zn(2+) pocket. Glu-409 is an active-site residue. Zn(2+) contacts are provided by His-412 and Asp-485.

This sequence in the central section; belongs to the AAA ATPase family. In the C-terminal section; belongs to the peptidase M41 family. Homohexamer. Zn(2+) serves as cofactor.

The protein localises to the cell membrane. In terms of biological role, acts as a processive, ATP-dependent zinc metallopeptidase for both cytoplasmic and membrane proteins. Plays a role in the quality control of integral membrane proteins. In Symbiobacterium thermophilum (strain DSM 24528 / JCM 14929 / IAM 14863 / T), this protein is ATP-dependent zinc metalloprotease FtsH 1.